The sequence spans 73 residues: Neuropeptide-like protein 29 (73 aa).

An N-terminal signal peptide occupies residues Met-1–Ala-22. 5 positions are modified to tyrosine amide: Tyr-29, Tyr-39, Tyr-47, Tyr-55, and Tyr-63. A Tryptophan amide modification is found at Trp-71.

Belongs to the YARP (YGGW-amide related peptide) family. Weakly or not expressed in absence of infection. Upon infection by D.coniospora, it is expressed in hypoderm. Also expressed in perivulval cells when D.coniospora spores adhere to this region. Expressed in hypodermis upon physical injury.

It is found in the secreted. Its function is as follows. Antimicrobial peptides that have antibacterial activity against the Gram-negative bacteria S.marcescens. Has antifungal activity against D.coniospora. May play a role in response to physical injury and osmotic stress. Through the neuropeptide receptor nlp-29, induces sleep upon activation of the innate immune response to molting and injury to the adult epidermis. The polypeptide is Neuropeptide-like protein 29 (Caenorhabditis elegans).